The chain runs to 460 residues: MDSKQSSELVFTVRRQEPELIAPAKPTPRETKFLSDIDDQEGLRFQIPVINFYRKDSSMGGKDPVEVIKKAIAETLVFYYPFAGRLREGNDRKLMVDCTGEGVMFVEANADVTLEEFGDELQPPFPCLEELLYDVPGSAGVLHCPLLLIQVTRLRCGGFIFALRLNHTMSDAPGLVQFMTAVGEMARGATAPSTLPVWCRELLNARNPPQVTCTHHEYEEVPDTKGTLIPLDDMVHRSFFFGPTEVSALRRFVPPHLHNCSTFEVLTAALWRCRTISIKPDPEEEVRVLCIVNARSRFNPQLPSGYYGNAFAFPVAVTTAEKLCKNPLGYALELVKKTKSDVTEEYMKSVADLMVIKGRPHFTVVRTYLVSDVTRAGFGEVDFGWGKAVYGGPAKGGVGAIPGVASFYIPFRNKKGENGIVVPICLPGFAMEKFVKELDSMLKGDAQLDNKKYAFITPAL.

Catalysis depends on proton acceptor residues His-167 and Asp-382.

Belongs to the plant acyltransferase family. In terms of tissue distribution, specifically expressed in flowers, mainly in the limb of flowers corollas, and, at low levels, in roots, stems, sepals and leaves.

It catalyses the reaction benzyl alcohol + benzoyl-CoA = benzyl benzoate + CoA. It carries out the reaction benzyl alcohol + acetyl-CoA = benzyl acetate + CoA. The enzyme catalyses 3-hydroxybenzyl alcohol + acetyl-CoA = 3-hydroxy-benzyl acetate + CoA. The catalysed reaction is 3-hydroxybenzyl alcohol + benzoyl-CoA = 3-hydroxy-benzyl benzoate + CoA. It catalyses the reaction 2-phenylethanol + benzoyl-CoA = phenethyl benzoate + CoA. It carries out the reaction (3Z)-hex-3-en-1-ol + benzoyl-CoA = (3Z)-hex-3-en-1-yl benzoate + CoA. The enzyme catalyses (2E)-geraniol + acetyl-CoA = (2E)-geranyl acetate + CoA. The catalysed reaction is butan-1-ol + benzoyl-CoA = butyl benzoate + CoA. It catalyses the reaction (2E)-geraniol + benzoyl-CoA = (2E)-geranyl benzoate + CoA. It carries out the reaction octan-1-ol + benzoyl-CoA = octyl benzoate + CoA. Its pathway is aromatic compound metabolism; benzoyl-CoA degradation. Involved in the production of volatile organic compounds (VOCs), including floral volatile benzenoids and phenylpropanoids (FVBP), in flowers of fragrant cultivars (e.g. cv. Mitchell and cv. V26), scent attracting pollinators (e.g. the night-active hawkmoth pollinator Manduca sexta). Acyltransferase that catalyzes the transfer of benzoyl and acetyl moieties to a large variety of potential substrate alcohols, and involved in the formation of volatile esters benzyl benzoate and phenylethyl benzoate from benzoyl-CoA. With acetyl-CoA, mainly active on benzyl alcohol, and, to a lower extent, on 3-hydroxybenzyl alcohol, geraniol, and 2-phenylethanol, but barely active on butanol, 1-octanol, 4-hydroxy-benzyl alcohol, 2-hexanol, cis-3-hexen-1-ol and linalool. With benzoyl-CoA, mainly active on benzyl alcohol, but also efficient on several substrates, including 3-hydroxybenzyl alcohol, 2-phenylethanol, geraniol, butanol, cis-3-hexen-1-ol and 1-octanol. This is Benzyl alcohol O-benzoyltransferase from Petunia hybrida (Petunia).